Consider the following 287-residue polypeptide: MAIKPLDESITSREAITSKADTAPRPTALIFDSGVGGLSVYQEIRQLLPDLHYIYAFDNVAFPYGEKSGEFIVERVLEIVTAVQQRHPLAIVVIACNTASTVSLPALRERFTFPVVGVVPAIKPAVRLTRNGVVGLLATRGTVHASYTQDLIERFATDCKIELLGSSELVELAETKLHGGVVPKEALKKILHPWLAMREPPDTIVLGCTHFPLLTEELAQVLPEGTRMVDSGAAIARRTAWLISSQENVISSDEENIAYCMALNADTDALLPVLQGYGFPSLEKLPI.

Residues 32 to 33 (DS) and 64 to 65 (YG) each bind substrate. Catalysis depends on C96, which acts as the Proton donor/acceptor. 97–98 (NT) lines the substrate pocket. The active-site Proton donor/acceptor is C208. 209–210 (TH) lines the substrate pocket.

This sequence belongs to the aspartate/glutamate racemases family.

It catalyses the reaction L-glutamate = D-glutamate. It participates in cell wall biogenesis; peptidoglycan biosynthesis. Functionally, provides the (R)-glutamate required for cell wall biosynthesis. The sequence is that of Glutamate racemase from Yersinia enterocolitica serotype O:8 / biotype 1B (strain NCTC 13174 / 8081).